A 4034-amino-acid chain; its full sequence is Polyketide synthase-nonribosomal peptide synthetase ACE1 (4034 aa).

The 439-residue stretch at 10–448 folds into the Ketosynthase family 3 (KS3) domain; sequence TEPIAIIGSG…GANAHVILES (439 aa). Catalysis depends on for beta-ketoacyl synthase activity residues cysteine 183, histidine 322, and histidine 368. Residues 560 to 879 form an acyl transferase region; the sequence is VFTGQGAQWA…PYFGCLSRGT (320 aa). Positions 951-1082 are N-terminal hotdog fold; sequence NELLGTRLPD…GDLVVLLGEP (132 aa). The region spanning 951-1257 is the PKS/mFAS DH domain; sequence NELLGTRLPD…TKPLSPPSAA (307 aa). Residues 952 to 1252 are dehydratase (DH) domain; the sequence is ELLGTRLPDD…LQGLHTKPLS (301 aa). Histidine 983 (proton acceptor; for dehydratase activity) is an active-site residue. A C-terminal hotdog fold region spans residues 1097-1257; sequence MKDIDEERFY…TKPLSPPSAA (161 aa). The active-site Proton donor; for dehydratase activity is aspartate 1157. Residues 1396–1594 are methyltransferase (MT) domain; sequence NMLNRFYSDA…SGADIVTPHH (199 aa). The segment at 2144–2317 is ketoreductase (KR)domain; sequence TYWLVGLTGG…AGSSVEIGCI (174 aa). One can recognise a Carrier 1 domain in the interval 2424–2505; it reads KSSEEVLDIL…LLLEFVQGLI (82 aa). Serine 2465 carries the post-translational modification O-(pantetheine 4'-phosphoryl)serine. The segment at 2512-2598 is disordered; it reads KLDGSDGADA…SPTTSASMAS (87 aa). The span at 2556–2577 shows a compositional bias: low complexity; that stretch reads PSGPASPTSPSSATASPGRSRS. A compositionally biased stretch (polar residues) spans 2586–2598; that stretch reads TPVSPTTSASMAS. The interval 2608–3037 is condensation; it reads TVPVSFGQSR…ATSLNRPAIY (430 aa). An adenylation region spans residues 3073–3473; that stretch reads KYATKFALRN…GGLIIEGRID (401 aa). Residues 3598 to 3678 enclose the Carrier 2 domain; it reads AELGSDQARM…AMTDLVLSDD (81 aa). Position 3638 is an O-(pantetheine 4'-phosphoryl)serine (serine 3638). The tract at residues 3719-3944 is reductase-like; the sequence is LTGATGFLGR…DFVSVENVAA (226 aa).

The protein belongs to the NRP synthetase family.

The protein localises to the cytoplasm. Its pathway is secondary metabolite biosynthesis. Its function is as follows. Hybrid PKS-NRPS synthetase; part of the gene cluster that mediates the biosynthesis of a tyrosine-derived cytochalasan acting as a fungal signal recognized by resistant rice plants and leads to avirulence in Pi33 resistant rice cultivars. The first step in the pathway is catalyzed by the hybrid PKS-NRPS ACE1, assisted by the enoyl reductase RAP1, that are responsible for fusion of the tyrosine precursor and the polyketide backbone. The polyketide synthase module (PKS) of ACE1 is responsible for the synthesis of the polyketide backbone and the downstream nonribosomal peptide synthetase (NRPS) amidates the carboxyl end of the polyketide with the tyrosine precursor. Because ACE1 lacks a designated enoylreductase (ER) domain, the required activity is provided the enoyl reductase RAP1. Reduction by the hydrolyase ORFZ, followed by dehydration and intra-molecular Diels-Alder cyclization by the Diels-Alderase ORF3 then yield the required isoindolone-fused macrocycle. A number of oxidative steps catalyzed by the tailoring enzymes identified within the cluster, including cytochrome P450 monooxygenases CYP1 to CYP4, the FAD-linked oxidoreductase OXR2 and the short-chain dehydrogenase/reductase OXR1, are further required to afford the final cytochalasans that confer avirulence and which have still to be identified. The monooxygenase CYP1 has been shown to be a site-selective C-18 hydroxylase whereas the function of CYP3 is the site-selective epoxidation of the C-6/C-7 olefin that is present in some intermediate compounds. Finally, SYN2 and RAP2 are not required for avirulence in Pi33 resistant rice cultivars. This Pyricularia oryzae (strain 70-15 / ATCC MYA-4617 / FGSC 8958) (Rice blast fungus) protein is Polyketide synthase-nonribosomal peptide synthetase ACE1.